The primary structure comprises 720 residues: Inactive serine protease PAMR1 (720 aa).

An N-terminal signal peptide occupies residues 1–21 (MELGCWTQLGLTFLQLLLISS). Intrachain disulfides connect Cys128/Cys150, Cys177/Cys199, Cys239/Cys250, Cys244/Cys260, Cys262/Cys271, Cys280/Cys329, Cys315/Cys342, Cys414/Cys442, and Cys489/Cys505. The CUB domain maps to 128–236 (CGQVLRAPKG…DGFHAIYEEI (109 aa)). Positions 235–272 (EITACSSSPCFHDGTCVLDKAGSYKCACLAGYTGQRCE) constitute an EGF-like domain. Sushi domains lie at 278–344 (RNCS…ICIK) and 387–444 (APTK…SCIP). Positions 445–720 (ICGKIENITA…FKDWIERNMK (276 aa)) constitute a Peptidase S1 domain. Asn614 carries an N-linked (GlcNAc...) asparagine glycan. 2 disulfides stabilise this stretch: Cys630–Cys649 and Cys661–Cys697.

The protein belongs to the peptidase S1 family.

It localises to the secreted. In terms of biological role, may play a role in regeneration of skeletal muscle. This is Inactive serine protease PAMR1 (PAMR1) from Homo sapiens (Human).